Here is a 205-residue protein sequence, read N- to C-terminus: Phosphoheptose isomerase (205 aa).

Positions 38 to 200 (LAVRLALGSK…LFEAVGELEP (163 aa)) constitute an SIS domain. 53–55 (NGG) contacts substrate. His-62 and Glu-66 together coordinate Zn(2+). Residues Glu-66, 95-96 (ND), 121-123 (STS), Ser-126, and Gln-173 contribute to the substrate site. Positions 173 and 181 each coordinate Zn(2+).

It belongs to the SIS family. GmhA subfamily. As to quaternary structure, homotetramer. Zn(2+) is required as a cofactor.

Its subcellular location is the cytoplasm. It carries out the reaction 2 D-sedoheptulose 7-phosphate = D-glycero-alpha-D-manno-heptose 7-phosphate + D-glycero-beta-D-manno-heptose 7-phosphate. It participates in carbohydrate biosynthesis; D-glycero-D-manno-heptose 7-phosphate biosynthesis; D-glycero-alpha-D-manno-heptose 7-phosphate and D-glycero-beta-D-manno-heptose 7-phosphate from sedoheptulose 7-phosphate: step 1/1. Catalyzes the isomerization of sedoheptulose 7-phosphate in D-glycero-D-manno-heptose 7-phosphate. This Maridesulfovibrio salexigens (strain ATCC 14822 / DSM 2638 / NCIMB 8403 / VKM B-1763) (Desulfovibrio salexigens) protein is Phosphoheptose isomerase.